The sequence spans 560 residues: E3 SUMO-protein ligase CBX4 (560 aa).

Residues Met-1–Lys-75 form an involved in interaction with H3C15 and H3C1 region. The interaction with BMI1 stretch occupies residues Met-1–Asn-539. The region spanning Phe-11–Tyr-69 is the Chromo domain. Residues Lys-77, Lys-106, Lys-114, and Lys-125 each participate in a glycyl lysine isopeptide (Lys-Gly) (interchain with G-Cter in SUMO2) cross-link. Residues Val-92–Tyr-152 are disordered. Lys-149 is modified (N6-acetyllysine; alternate). Residue Lys-149 forms a Glycyl lysine isopeptide (Lys-Gly) (interchain with G-Cter in SUMO2); alternate linkage. Glycyl lysine isopeptide (Lys-Gly) (interchain with G-Cter in SUMO2) cross-links involve residues Lys-157, Lys-167, and Lys-178. The residue at position 182 (Ser-182) is a Phosphoserine. Residues Lys-191, Lys-205, Lys-212, Lys-223, Lys-249, Lys-268, Lys-278, and Lys-280 each participate in a glycyl lysine isopeptide (Lys-Gly) (interchain with G-Cter in SUMO2) cross-link. A disordered region spans residues Ala-217–Gly-243. Composition is skewed to basic and acidic residues over residues Ser-281–Ser-291 and Ala-298–Glu-331. The interval Ser-281–Leu-404 is disordered. Glycyl lysine isopeptide (Lys-Gly) (interchain with G-Cter in SUMO2) cross-links involve residues Lys-320, Lys-352, and Lys-365. The segment covering Pro-380–Ala-401 has biased composition (basic residues). A Phosphoserine modification is found at Ser-467. Lys-494 participates in a covalent cross-link: Glycyl lysine isopeptide (Lys-Gly) (interchain with G-Cter in SUMO2); alternate. Lys-494 is covalently cross-linked (Glycyl lysine isopeptide (Lys-Gly) (interchain with G-Cter in SUMO); alternate). Position 497 is a phosphothreonine; by HIPK2 (Thr-497). Residues Ala-509–Glu-521 are compositionally biased toward low complexity. The tract at residues Ala-509–Glu-528 is disordered. The involved in interaction with H3C15 and RNF2 stretch occupies residues Ser-531–Glu-556. An interaction with RNF2 region spans residues Ile-540–Val-560.

In terms of assembly, interacts with histone H3-K9Me3. Interacts with CHTOP. Component of a PRC1-like complex. The composition of the PRC1 complex differs between the PRC1 complex in pluripotent embryonic stem cells containing RNF2, CBX7 and PCGF2, and the PRC1 complex in differentiating cells containing RNF2, CBX2, CBX4 and BMI1. Self-associates. Interacts with SUV39H1 and HIPK2. Interacts with CSNK2B. May interact with H3C15, H3C1 and RNF2. Interacts with SUMO1P1/SUMO5. Interacts with PRDM1/Blimp-1. In terms of processing, ubiquitinated. Ubiquitination regulates the function of the Polycomb group (PcG) multiprotein PRC1-like complex. Deubiquitinated by USP26. Phosphorylated on Thr-497 by HIPK2 upon DNA damage. This phosphorylation stimulates E3 SUMO-protein ligase activity and promotes sumoylation on Lys-494, as well as sumoylation of other target proteins, such as HNRNPK. In terms of tissue distribution, ubiquitous.

The protein resides in the nucleus. The protein localises to the nucleus speckle. Its pathway is protein modification; protein sumoylation. Its function is as follows. E3 SUMO-protein ligase that catalyzes sumoylation of target proteins by promoting the transfer of SUMO from the E2 enzyme to the substrate. Involved in the sumoylation of HNRNPK, a p53/TP53 transcriptional coactivator, hence indirectly regulates p53/TP53 transcriptional activation resulting in p21/CDKN1A expression. Monosumoylates ZNF131. In terms of biological role, component of a Polycomb group (PcG) multiprotein PRC1-like complex, a complex class required to maintain the transcriptionally repressive state of many genes, including Hox genes, throughout development. PcG PRC1 complex acts via chromatin remodeling and modification of histones; it mediates monoubiquitination of histone H2A 'Lys-119', rendering chromatin heritably changed in its expressibility. Binds to histone H3 trimethylated at 'Lys-9' (H3K9me3). Plays a role in the lineage differentiation of the germ layers in embryonic development. The chain is E3 SUMO-protein ligase CBX4 (CBX4) from Homo sapiens (Human).